Here is a 313-residue protein sequence, read N- to C-terminus: MEKRKIILDCDPGHDDAIAMMMAAKHPAIDLLGITIVAGNQTLDKTLINGLNVCQKLEINVPVYAGMPQPIMRQQIVADNIHGETGLDGPVFEPLTRQAESTHAVKYIIDTLMASDGDITLVPVGPLSNIAVAMRMQPAILPKIREIVLMGGAYGTGNFTPSAEFNIFADPEAARVVFTSGVPLVMMGLDLTNQTVCTPDVIARMERAGGPAGELFSDIMNFTLKTQFENYGLAGGPVHDATCIGYLINPDGIKTQEMYVEVDVNSGPCYGRTVCDELGVLGKPANTKVGITIDTDWFWGLVEECVRGYIKTH.

Residue Asp-11 is the Proton acceptor of the active site. Ca(2+) is bound by residues Asp-11, Asp-16, and Val-124. Positions 227 and 239 each coordinate substrate. Residue Asp-240 coordinates Ca(2+).

This sequence belongs to the IUNH family. RihB subfamily. Homotetramer. Requires Ca(2+) as cofactor.

The enzyme catalyses a pyrimidine ribonucleoside + H2O = a pyrimidine nucleobase + D-ribose. Hydrolyzes cytidine or uridine to ribose and cytosine or uracil, respectively. Has a clear preference for cytidine over uridine. Strictly specific for ribonucleosides. The protein is Pyrimidine-specific ribonucleoside hydrolase RihB of Escherichia coli (strain SMS-3-5 / SECEC).